A 314-amino-acid chain; its full sequence is tRNA dimethylallyltransferase (314 aa).

13–20 (GPTAIGKT) contributes to the ATP binding site. Position 15–20 (15–20 (TAIGKT)) interacts with substrate. Positions 38-41 (DSMQ) are interaction with substrate tRNA.

It belongs to the IPP transferase family. As to quaternary structure, monomer. Mg(2+) is required as a cofactor.

It catalyses the reaction adenosine(37) in tRNA + dimethylallyl diphosphate = N(6)-dimethylallyladenosine(37) in tRNA + diphosphate. Functionally, catalyzes the transfer of a dimethylallyl group onto the adenine at position 37 in tRNAs that read codons beginning with uridine, leading to the formation of N6-(dimethylallyl)adenosine (i(6)A). The protein is tRNA dimethylallyltransferase of Desulfotalea psychrophila (strain LSv54 / DSM 12343).